A 114-amino-acid polypeptide reads, in one-letter code: Large ribosomal subunit protein bL19 (114 aa).

Belongs to the bacterial ribosomal protein bL19 family.

Its function is as follows. This protein is located at the 30S-50S ribosomal subunit interface and may play a role in the structure and function of the aminoacyl-tRNA binding site. This chain is Large ribosomal subunit protein bL19, found in Bacillus cytotoxicus (strain DSM 22905 / CIP 110041 / 391-98 / NVH 391-98).